A 1798-amino-acid polypeptide reads, in one-letter code: MELTSRERGRGQPLPWELRLGLLLSVLAATLAQAPAPDVPGCSRGSCYPATGDLLVGRADRLTASSTCGLNGPQPYCIVSHLQDEKKCFLCDSRRPFSARDNPHSHRIQNVVTSFAPQRRAAWWQSENGIPAVTIQLDLEAEFHFTHLIMTFKTFRPAAMLVERSADFGRTWHVYRYFSYDCGADFPGVPLAPPRHWDDVVCESRYSEIEPSTEGEVIYRVLDPAIPIPDPYSSRIQNLLKITNLRVNLTRLHTLGDNLLDPRREIREKYYYALYELVVRGNCFCYGHASECAPAPGAPAHAEGMVHGACICKHNTRGLNCEQCQDFYRDLPWRPAEDGHSHACRKCECHGHTHSCHFDMAVYLASGNVSGGVCDGCQHNTAGRHCELCRPFFYRDPTKDLRDPAVCRSCDCDPMGSQDGGRCDSHDDPALGLVSGQCRCKEHVVGTRCQQCRDGFFGLSISDRLGCRRCQCNARGTVPGSTPCDPNSGSCYCKRLVTGRGCDRCLPGHWGLSHDLLGCRPCDCDVGGALDPQCDEGTGQCHCRQHMVGRRCEQVQPGYFRPFLDHLIWEAEDTRGQVLDVVERLVTPGETPSWTGSGFVRLQEGQTLEFLVASVPKAMDYDLLLRLEPQVPEQWAELELIVQRPGPVPAHSLCGHLVPKDDRIQGTLQPHARYLIFPNPVCLEPGISYKLHLKLVRTGGSAQPETPYSGPGLLIDSLVLLPRVLVLEMFSGGDAAALERQATFERYQCHEEGLVPSKTSPSEACAPLLISLSTLIYNGALPCQCNPQGSLSSECNPHGGQCLCKPGVVGRRCDLCAPGYYGFGPTGCQACQCSHEGALSSLCEKTSGQCLCRTGAFGLRCDRCQRGQWGFPSCRPCVCNGHADECNTHTGACLGCRDHTGGEHCERCIAGFHGDPRLPYGGQCRPCPCPEGPGSQRHFATSCHQDEYSQQIVCHCRAGYTGLRCEACAPGHFGDPSRPGGRCQLCECSGNIDPMDPDACDPHTGQCLRCLHHTEGPHCAHCKPGFHGQAARQSCHRCTCNLLGTNPQQCPSPDQCHCDPSSGQCPCLPNVQGPSCDRCAPNFWNLTSGHGCQPCACHPSRARGPTCNEFTGQCHCRAGFGGRTCSECQELHWGDPGLQCHACDCDSRGIDTPQCHRFTGHCSCRPGVSGVRCDQCARGFSGIFPACHPCHACFGDWDRVVQDLAARTQRLEQRAQELQQTGVLGAFESSFWHMQEKLGIVQGIVGARNTSAASTAQLVEATEELRREIGEATEHLTQLEADLTDVQDENFNANHALSGLERDRLALNLTLRQLDQHLDLLKHSNFLGAYDSIRHAHSQSAEAERRANTSALAVPSPVSNSASARHRTEALMDAQKEDFNSKHMANQRALGKLSAHTHTLSLTDINELVCGAPGDAPCATSPCGGAGCRDEDGQPRCGGLSCNGAAATADLALGRARHTQAELQRALAEGGSILSRVAETRRQASEAQQRAQAALDKANASRGQVEQANQELQELIQSVKDFLNQEGADPDSIEMVATRVLELSIPASAEQIQHLAGAIAERVRSLADVDAILARTVGDVRRAEQLLQDARRARSWAEDEKQKAETVQAALEEAQRAQGIAQGAIRGAVADTRDTEQTLYQVQERMAGAERALSSAGERARQLDALLEALKLKRAGNSLAASTAEETAGSAQGRAQEAEQLLRGPLGDQYQTVKALAERKAQGVLAAQARAEQLRDEARDLLQAAQDKLQRLQELEGTYEENERALESKAAQLDGLEARMRSVLQAINLQVQIYNTCQ.

A signal peptide spans 1–32 (MELTSRERGRGQPLPWELRLGLLLSVLAATLA). The 240-residue stretch at 43–282 (SRGSCYPATG…ALYELVVRGN (240 aa)) folds into the Laminin N-terminal domain. Asn-248 carries N-linked (GlcNAc...) asparagine glycosylation. 19 disulfide bridges follow: Cys-283–Cys-292, Cys-285–Cys-310, Cys-312–Cys-321, Cys-324–Cys-344, Cys-347–Cys-356, Cys-349–Cys-374, Cys-377–Cys-386, Cys-389–Cys-407, Cys-410–Cys-423, Cys-412–Cys-438, Cys-440–Cys-449, Cys-452–Cys-467, Cys-470–Cys-484, Cys-472–Cys-491, Cys-493–Cys-502, Cys-505–Cys-519, Cys-522–Cys-534, Cys-524–Cys-541, and Cys-543–Cys-552. Laminin EGF-like domains are found at residues 283 to 346 (CFCY…ACRK), 347 to 409 (CECH…VCRS), 410 to 469 (CDCD…GCRR), and 470 to 521 (CQCN…GCRP). Asn-368 is a glycosylation site (N-linked (GlcNAc...) asparagine). Residues 522-552 (CDCDVGGALDPQCDEGTGQCHCRQHMVGRRC) form the Laminin EGF-like 5; truncated domain. Residues 561 to 777 (RPFLDHLIWE…LLISLSTLIY (217 aa)) enclose the Laminin IV type B domain. Intrachain disulfides connect Cys-783/Cys-795, Cys-785/Cys-802, Cys-804/Cys-813, Cys-816/Cys-828, Cys-831/Cys-843, Cys-833/Cys-850, Cys-852/Cys-861, Cys-864/Cys-874, Cys-877/Cys-886, Cys-879/Cys-893, Cys-896/Cys-905, Cys-908/Cys-924, Cys-927/Cys-943, Cys-929/Cys-954, Cys-956/Cys-965, Cys-968/Cys-983, Cys-986/Cys-1000, Cys-988/Cys-1007, Cys-1010/Cys-1019, Cys-1022/Cys-1035, Cys-1038/Cys-1058, Cys-1040/Cys-1065, Cys-1067/Cys-1076, Cys-1079/Cys-1092, Cys-1095/Cys-1107, Cys-1097/Cys-1114, Cys-1116/Cys-1125, Cys-1128/Cys-1140, Cys-1143/Cys-1155, Cys-1145/Cys-1162, Cys-1164/Cys-1173, and Cys-1176/Cys-1187. Laminin EGF-like domains follow at residues 783-830 (CQCN…GCQA), 831-876 (CQCS…SCRP), 877-926 (CVCN…QCRP), 927-985 (CPCP…RCQL), 986-1037 (CECS…SCHR), 1038-1094 (CTCN…GCQP), 1095-1142 (CACH…QCHA), and 1143-1189 (CDCD…ACHP). An N-linked (GlcNAc...) asparagine glycan is attached at Asn-1085. Residues 1190–1409 (CHACFGDWDR…LSLTDINELV (220 aa)) are domain II. N-linked (GlcNAc...) asparagine glycosylation is found at Asn-1249, Asn-1308, and Asn-1348. The stretch at 1253–1319 (ASTAQLVEAT…TLRQLDQHLD (67 aa)) forms a coiled coil. The interval 1338–1364 (SQSAEAERRANTSALAVPSPVSNSASA) is disordered. Residues 1350 to 1363 (SALAVPSPVSNSAS) show a composition bias toward low complexity. Residues 1410-1442 (CGAPGDAPCATSPCGGAGCRDEDGQPRCGGLSC) form a domain alpha region. A domain I region spans residues 1443 to 1798 (NGAAATADLA…LQVQIYNTCQ (356 aa)). The stretch at 1472–1526 (SILSRVAETRRQASEAQQRAQAALDKANASRGQVEQANQELQELIQSVKDFLNQE) forms a coiled coil. N-linked (GlcNAc...) asparagine glycosylation is present at Asn-1499. Ser-1532 is subject to Phosphoserine; by FAM20C. Positions 1577–1790 (VGDVRRAEQL…RSVLQAINLQ (214 aa)) form a coiled coil.

Laminin is a complex glycoprotein, consisting of three different polypeptide chains (alpha, beta, gamma), which are bound to each other by disulfide bonds into a cross-shaped molecule comprising one long and three short arms with globules at each end. Beta-2 is a subunit of laminin-3 (laminin-121 or S-laminin), laminin-4 (laminin-221 or S-merosin), laminin-7 (laminin-321 or KS-laminin), laminin-9 (laminin-421), laminin-11 (laminin-521), laminin-14 (laminin-423) and laminin-15 (laminin-523).

It is found in the secreted. The protein resides in the extracellular space. It localises to the extracellular matrix. The protein localises to the basement membrane. Its function is as follows. Binding to cells via a high affinity receptor, laminin is thought to mediate the attachment, migration and organization of cells into tissues during embryonic development by interacting with other extracellular matrix components. The polypeptide is Laminin subunit beta-2 (LAMB2) (Homo sapiens (Human)).